An 85-amino-acid chain; its full sequence is Small ribosomal subunit protein uS17 (85 aa).

Belongs to the universal ribosomal protein uS17 family. Part of the 30S ribosomal subunit.

One of the primary rRNA binding proteins, it binds specifically to the 5'-end of 16S ribosomal RNA. This Mycoplasma capricolum subsp. capricolum (strain California kid / ATCC 27343 / NCTC 10154) protein is Small ribosomal subunit protein uS17.